The primary structure comprises 96 residues: DNA-directed RNA polymerase subunit Rpo11 (96 aa).

Belongs to the archaeal Rpo11/eukaryotic RPB11/RPC19 RNA polymerase subunit family. Part of the RNA polymerase complex.

It localises to the cytoplasm. It catalyses the reaction RNA(n) + a ribonucleoside 5'-triphosphate = RNA(n+1) + diphosphate. Its function is as follows. DNA-dependent RNA polymerase (RNAP) catalyzes the transcription of DNA into RNA using the four ribonucleoside triphosphates as substrates. This is DNA-directed RNA polymerase subunit Rpo11 from Haloquadratum walsbyi (strain DSM 16790 / HBSQ001).